Here is a 789-residue protein sequence, read N- to C-terminus: DNA replication helicase (789 aa).

An ATP-binding site is contributed by 64–71 (GTAGAGKS).

It belongs to the herpesviridae helicase family. Associates with the primase and the primase-associated factor to form the helicase-primase complex.

The protein localises to the host nucleus. Component of the helicase/primase complex. Unwinds the DNA at the replication forks and generates single-stranded DNA for both leading and lagging strand synthesis. The primase synthesizes short RNA primers on the lagging strand that the polymerase elongates using dNTPs. Possesses helicase-like motifs and therefore may act as the helicase subunit of the complex. This Equus caballus (Horse) protein is DNA replication helicase.